We begin with the raw amino-acid sequence, 252 residues long: Triosephosphate isomerase (252 aa).

10 to 12 (NWK) is a substrate binding site. H96 serves as the catalytic Electrophile. The Proton acceptor role is filled by E168. Residues G174, S214, and 235–236 (GG) each bind substrate.

The protein belongs to the triosephosphate isomerase family. Homodimer.

It localises to the cytoplasm. The enzyme catalyses D-glyceraldehyde 3-phosphate = dihydroxyacetone phosphate. It functions in the pathway carbohydrate biosynthesis; gluconeogenesis. The protein operates within carbohydrate degradation; glycolysis; D-glyceraldehyde 3-phosphate from glycerone phosphate: step 1/1. Its function is as follows. Involved in the gluconeogenesis. Catalyzes stereospecifically the conversion of dihydroxyacetone phosphate (DHAP) to D-glyceraldehyde-3-phosphate (G3P). In Streptococcus pyogenes serotype M5 (strain Manfredo), this protein is Triosephosphate isomerase.